We begin with the raw amino-acid sequence, 120 residues long: MLKFTEEHEWLQIEGSVATVGITNYAVDQLGDLVFVELPEVGATFSKNGNAATVESVKAASDVYCPLDGEITEVNPAIVADPSLVNSDPQGAGWFFKLKLANPADADGLLDEAAYKELTA.

The 83-residue stretch at valine 17 to lysine 99 folds into the Lipoyl-binding domain. Residue lysine 58 is modified to N6-lipoyllysine.

The protein belongs to the GcvH family. The glycine cleavage system is composed of four proteins: P, T, L and H. (R)-lipoate serves as cofactor.

In terms of biological role, the glycine cleavage system catalyzes the degradation of glycine. The H protein shuttles the methylamine group of glycine from the P protein to the T protein. The chain is Glycine cleavage system H protein from Rhizobium leguminosarum bv. trifolii (strain WSM2304).